The sequence spans 150 residues: Arginine repressor (150 aa).

The protein belongs to the ArgR family.

The protein resides in the cytoplasm. It participates in amino-acid biosynthesis; L-arginine biosynthesis [regulation]. In terms of biological role, regulates arginine biosynthesis genes. This Desulforudis audaxviator (strain MP104C) protein is Arginine repressor.